Consider the following 431-residue polypeptide: Protein EARLY STARVATION 1, chloroplastic (431 aa).

A chloroplast-targeting transit peptide spans 1-19 (MAACSRGLVARPFDLTARG). Disordered stretches follow at residues 65-126 (GNKP…DTGI) and 403-431 (GVYP…SPLE). Positions 415–431 (PAPPSDDPPGMPPSPLE) are enriched in pro residues.

This sequence belongs to the ESV1 family.

The protein localises to the plastid. It is found in the chloroplast stroma. Functionally, binds preferentially to highly ordered alpha-glucans, such as starch and crystalline maltodextrins. Involved in the organization of the starch granule matrix, thus influencing starch turnover by modulating the accessibility of starch polymers to modifying and degrading enzymes. Required for the control of starch degradation in leaves and starch distribution in nonphotosynthetic parts. Promotes gravitropic responses, negative in shoots but positive in roots, by facilitating starch granules (statoliths) formation in hypocotyls and roots columella. Facilitates tight packing of starch granules in grains. This Oryza sativa subsp. japonica (Rice) protein is Protein EARLY STARVATION 1, chloroplastic.